We begin with the raw amino-acid sequence, 68 residues long: Metallothionein-3 (68 aa).

Met-1 is subject to N-acetylmethionine. The interval 1 to 30 is beta; that stretch reads MDPETCPCPTGGSCTCSDPCKCEGCTCASS. Residues Cys-6, Cys-8, Cys-14, Cys-16, Cys-20, Cys-22, Cys-25, and Cys-27 each contribute to the a divalent metal cation site. The interval 31–68 is alpha; it reads KKSCCSCCPAECEKCAKDCVCKGGEGAEAEEKKCSCCQ. Ser-33 is modified (phosphoserine). A divalent metal cation is bound by residues Cys-34, Cys-35, Cys-37, Cys-38, Cys-42, Cys-45, Cys-49, Cys-51, Cys-64, Cys-66, and Cys-67.

It belongs to the metallothionein superfamily. Type 1 family.

Functionally, binds heavy metals. Contains five zinc and one copper atoms per polypeptide chain and only a negligible amount of cadmium. This is Metallothionein-3 (MT3) from Bos mutus grunniens (Wild yak).